The chain runs to 179 residues: ATP synthase subunit delta (179 aa).

Belongs to the ATPase delta chain family. As to quaternary structure, F-type ATPases have 2 components, F(1) - the catalytic core - and F(0) - the membrane proton channel. F(1) has five subunits: alpha(3), beta(3), gamma(1), delta(1), epsilon(1). F(0) has three main subunits: a(1), b(2) and c(10-14). The alpha and beta chains form an alternating ring which encloses part of the gamma chain. F(1) is attached to F(0) by a central stalk formed by the gamma and epsilon chains, while a peripheral stalk is formed by the delta and b chains.

It is found in the cell inner membrane. Functionally, f(1)F(0) ATP synthase produces ATP from ADP in the presence of a proton or sodium gradient. F-type ATPases consist of two structural domains, F(1) containing the extramembraneous catalytic core and F(0) containing the membrane proton channel, linked together by a central stalk and a peripheral stalk. During catalysis, ATP synthesis in the catalytic domain of F(1) is coupled via a rotary mechanism of the central stalk subunits to proton translocation. In terms of biological role, this protein is part of the stalk that links CF(0) to CF(1). It either transmits conformational changes from CF(0) to CF(1) or is implicated in proton conduction. This Burkholderia mallei (strain NCTC 10247) protein is ATP synthase subunit delta.